A 162-amino-acid polypeptide reads, in one-letter code: Succinate dehydrogenase assembly factor 2-A, mitochondrial (162 aa).

It belongs to the SDHAF2 family. Interacts with the flavoprotein subunit within the SDH catalytic dimer.

It is found in the mitochondrion matrix. Plays an essential role in the assembly of succinate dehydrogenase (SDH), an enzyme complex (also referred to as respiratory complex II) that is a component of both the tricarboxylic acid (TCA) cycle and the mitochondrial electron transport chain, and which couples the oxidation of succinate to fumarate with the reduction of ubiquinone (coenzyme Q) to ubiquinol. Required for flavinylation (covalent attachment of FAD) of the flavoprotein subunit of the SDH catalytic dimer. The chain is Succinate dehydrogenase assembly factor 2-A, mitochondrial from Drosophila yakuba (Fruit fly).